The sequence spans 740 residues: E3 ubiquitin-protein ligase DTX3L (740 aa).

Ala-2 carries the post-translational modification N-acetylalanine. The residue at position 9 (Ser-9) is a Phosphoserine. Disordered stretches follow at residues 96–119 (NTRP…MHQH), 195–231 (SEQK…KAEQ), and 524–551 (HETP…SEAS). Composition is skewed to polar residues over residues 98-111 (RPQI…QAET) and 195-205 (SEQKQQFSPSM). Ser-202 is subject to Phosphoserine. Basic and acidic residues predominate over residues 206–218 (TERKPLSQQERDS). Phosphoserine is present on residues Ser-221, Ser-532, and Ser-539. An RING-type zinc finger spans residues 561-600 (CVICMDTISNKKVLPKCKHEFCAPCINKAMSYKPICPTCQ).

The protein belongs to the Deltex family. Homodimer and heterodimer. Can heterodimerize with DTX1, enhancing its ubiquitin ligase activity in vitro. Interacts (via N-terminus) with ADP ribosyltransferase PARP9/BAL1 (via PARP catalytic domain) forming a stable complex; the interaction is required to activate PARP9 but is dispensable for DTX3L catalytic activity. Forms a complex with STAT1 and PARP9 independently of IFNB1 or IFNG-mediated STAT1 'Tyr-701' phosphorylation. Found in a complex with PARP9, STAT1 and H2BC9. Found in a complex with E3 ligase ITCH and ESCRT-0 components HGS and STAM. Interacts (via C-terminus) with ITCH; the interaction is increased upon CXCL12 stimulation and inhibits ITCH catalytic activity; the interaction is direct. Interacts with HGS and STAM; the interaction brings together HGS and STAM and promotes their recruitment to early endosomes. As to quaternary structure, (Microbial infection) Interacts with encephalomyocarditis virus (EMCV) C3 protease; the interaction results in C3 protease 'Lys-48'-linked ubiquitination. In terms of assembly, (Microbial infection) Interacts with human rhinovirus (HRV) C3 protease; the interaction results in C3 protease 'Lys-48'-linked ubiquitination. Autoubiquitinated.

It is found in the cytoplasm. The protein resides in the nucleus. The protein localises to the early endosome membrane. It localises to the lysosome membrane. The catalysed reaction is S-ubiquitinyl-[E2 ubiquitin-conjugating enzyme]-L-cysteine + [acceptor protein]-L-lysine = [E2 ubiquitin-conjugating enzyme]-L-cysteine + N(6)-ubiquitinyl-[acceptor protein]-L-lysine.. It participates in protein modification; protein ubiquitination. Binding to PARP9 enhances DTX3L catalytic activity. Its function is as follows. E3 ubiquitin-protein ligase which, in association with ADP-ribosyltransferase PARP9, plays a role in DNA damage repair and in interferon-mediated antiviral responses. Monoubiquitinates several histones, including histone H2A, H2B, H3 and H4. In response to DNA damage, mediates monoubiquitination of 'Lys-91' of histone H4 (H4K91ub1). The exact role of H4K91ub1 in DNA damage response is still unclear but it may function as a licensing signal for additional histone H4 post-translational modifications such as H4 'Lys-20' methylation (H4K20me). PARP1-dependent PARP9-DTX3L-mediated ubiquitination promotes the rapid and specific recruitment of 53BP1/TP53BP1, UIMC1/RAP80, and BRCA1 to DNA damage sites. By monoubiquitinating histone H2B H2BC9/H2BJ and thereby promoting chromatin remodeling, positively regulates STAT1-dependent interferon-stimulated gene transcription and thus STAT1-mediated control of viral replication. Independently of its catalytic activity, promotes the sorting of chemokine receptor CXCR4 from early endosome to lysosome following CXCL12 stimulation by reducing E3 ligase ITCH activity and thus ITCH-mediated ubiquitination of endosomal sorting complex required for transport ESCRT-0 components HGS and STAM. In addition, required for the recruitment of HGS and STAM to early endosomes. In association with PARP9, plays a role in antiviral responses by mediating 'Lys-48'-linked ubiquitination of encephalomyocarditis virus (EMCV) and human rhinovirus (HRV) C3 proteases and thus promoting their proteasomal-mediated degradation. This is E3 ubiquitin-protein ligase DTX3L (DTX3L) from Homo sapiens (Human).